A 197-amino-acid polypeptide reads, in one-letter code: MMFPQSRHSGSSHLPQQLKFTTSDSCDRIKDEFQLLQAQYHSLKLECDKLASEKSEMQRHYVMYYEMSYGLNIEMHKQAEIVKRLNGICAQVLPYLSQEHQQQVLGAIERAKQVTAPELNSIIRQQLQAHQLSQLQALALPLTPLPVGLQPPSLPAVSAGTGLLSLSALGSQTHLSKEDKNGHDGDTHQEDDGEKSD.

The interval leucine 166–aspartate 197 is CCN domain. A disordered region spans residues glycine 170–aspartate 197. Residues leucine 175–aspartate 197 show a composition bias toward basic and acidic residues. Serine 196 is subject to Phosphoserine.

Belongs to the WD repeat Groucho/TLE family. In terms of assembly, homooligomer and heterooligomer with other family members. Binds TCF7 and the NF-kappa-B subunit RELA. Interacts with PHF12. Interacts (via Q domain) with SIX3. Interacts with SIX6. Post-translationally, ubiquitinated by XIAP/BIRC4. As to expression, ubiquitously expressed in developing embryos by midgestation, a wide expression is conserved in adult. In mouse, abundantly expressed in muscle, heart and brain.

Its subcellular location is the nucleus. Functionally, transcriptional corepressor. Acts as a dominant repressor towards other family members. Inhibits NF-kappa-B-regulated gene expression. May be required for the initiation and maintenance of the differentiated state. Essential for the transcriptional repressor activity of SIX3 during retina and lens development. This Mus musculus (Mouse) protein is TLE family member 5.